Consider the following 231-residue polypeptide: Dephospho-CoA kinase domain-containing protein (231 aa).

The region spanning 3–207 (LVGLTGGIAS…RSMEYLPLRL (205 aa)) is the DPCK domain. Position 8–15 (8–15 (GGIASGKS)) interacts with ATP.

Belongs to the CoaE family.

The polypeptide is Dephospho-CoA kinase domain-containing protein (Dcakd) (Mus musculus (Mouse)).